Reading from the N-terminus, the 474-residue chain is Trehalose-6-phosphate synthase (474 aa).

Arginine 10 lines the D-glucose 6-phosphate pocket. Residue 22-23 (GG) participates in UDP-alpha-D-glucose binding. Tyrosine 77 and aspartate 131 together coordinate D-glucose 6-phosphate. UDP-alpha-D-glucose-binding residues include arginine 263 and lysine 268. Arginine 301 is a binding site for D-glucose 6-phosphate. UDP-alpha-D-glucose is bound by residues phenylalanine 340 and 366–370 (LVAKE).

This sequence belongs to the glycosyltransferase 20 family. In terms of assembly, homotetramer.

It carries out the reaction D-glucose 6-phosphate + UDP-alpha-D-glucose = alpha,alpha-trehalose 6-phosphate + UDP + H(+). Its pathway is glycan biosynthesis; trehalose biosynthesis. Its function is as follows. Probably involved in the osmoprotection via the biosynthesis of trehalose. Catalyzes the transfer of glucose from UDP-alpha-D-glucose (UDP-Glc) to D-glucose 6-phosphate (Glc-6-P) to form trehalose-6-phosphate. Acts with retention of the anomeric configuration of the UDP-sugar donor. This chain is Trehalose-6-phosphate synthase, found in Escherichia coli O6:K15:H31 (strain 536 / UPEC).